The following is a 316-amino-acid chain: 4-diphosphocytidyl-2-C-methyl-D-erythritol kinase (316 aa).

Residue Lys-23 is part of the active site. Position 108–118 (Pro-108–Ala-118) interacts with ATP. Asp-150 is an active-site residue.

This sequence belongs to the GHMP kinase family. IspE subfamily.

The enzyme catalyses 4-CDP-2-C-methyl-D-erythritol + ATP = 4-CDP-2-C-methyl-D-erythritol 2-phosphate + ADP + H(+). It functions in the pathway isoprenoid biosynthesis; isopentenyl diphosphate biosynthesis via DXP pathway; isopentenyl diphosphate from 1-deoxy-D-xylulose 5-phosphate: step 3/6. In terms of biological role, catalyzes the phosphorylation of the position 2 hydroxy group of 4-diphosphocytidyl-2C-methyl-D-erythritol. The protein is 4-diphosphocytidyl-2-C-methyl-D-erythritol kinase of Mycobacterium avium (strain 104).